Here is a 469-residue protein sequence, read N- to C-terminus: GTPase Der (469 aa).

2 EngA-type G domains span residues 30-193 and 203-376; these read PVLA…PEVA and RRVA…ASWD. GTP-binding positions include 36 to 43, 83 to 87, 145 to 148, 209 to 216, 256 to 260, and 321 to 324; these read GRPNVGKS, DTGGW, NKVD, GKPNVGKS, DTAGL, and NKWD. Residues 377 to 459 enclose the KH-like domain; sequence TRIPTGPLNS…PIRINVRVRE (83 aa).

Belongs to the TRAFAC class TrmE-Era-EngA-EngB-Septin-like GTPase superfamily. EngA (Der) GTPase family. In terms of assembly, associates with the 50S ribosomal subunit.

In terms of biological role, GTPase that plays an essential role in the late steps of ribosome biogenesis. This Mycobacterium marinum (strain ATCC BAA-535 / M) protein is GTPase Der.